The following is a 181-amino-acid chain: U1 small nuclear ribonucleoprotein C (181 aa).

Residues 2-34 (PKCDYCDVYLTHDSMSVRKAHNSGRNHLRNVVD) form a Matrin-type zinc finger. Composition is skewed to pro residues over residues 129-143 (PGMP…PGGL) and 150-174 (PIPP…PPPG). Residues 129-181 (PGMPAGMPFPPPGGLPPNFQFPIPPPGGFPGMPPPGQGFPGMPPPGGNHDERR) are disordered.

It belongs to the U1 small nuclear ribonucleoprotein C family. As to quaternary structure, U1 snRNP is composed of the 7 core Sm proteins B/B', D1, D2, D3, E, F and G that assemble in a heptameric protein ring on the Sm site of the small nuclear RNA to form the core snRNP, and at least 3 U1 snRNP-specific proteins U1-70K, U1-A and U1-C. U1-C interacts with U1 snRNA and the 5' splice-site region of the pre-mRNA.

It is found in the nucleus. In terms of biological role, component of the spliceosomal U1 snRNP, which is essential for recognition of the pre-mRNA 5' splice-site and the subsequent assembly of the spliceosome. U1-C is directly involved in initial 5' splice-site recognition for both constitutive and regulated alternative splicing. The interaction with the 5' splice-site seems to precede base-pairing between the pre-mRNA and the U1 snRNA. Stimulates commitment or early (E) complex formation by stabilizing the base pairing of the 5' end of the U1 snRNA and the 5' splice-site region. The protein is U1 small nuclear ribonucleoprotein C of Sclerotinia sclerotiorum (strain ATCC 18683 / 1980 / Ss-1) (White mold).